Consider the following 172-residue polypeptide: Small ribosomal subunit protein uS5 (172 aa).

An S5 DRBM domain is found at 13 to 76; sequence LVEKMISVNR…EQARHNMMKI (64 aa).

This sequence belongs to the universal ribosomal protein uS5 family. Part of the 30S ribosomal subunit. Contacts proteins S4 and S8.

In terms of biological role, with S4 and S12 plays an important role in translational accuracy. Its function is as follows. Located at the back of the 30S subunit body where it stabilizes the conformation of the head with respect to the body. The protein is Small ribosomal subunit protein uS5 of Chromobacterium violaceum (strain ATCC 12472 / DSM 30191 / JCM 1249 / CCUG 213 / NBRC 12614 / NCIMB 9131 / NCTC 9757 / MK).